The chain runs to 213 residues: Probable nicotinate-nucleotide adenylyltransferase (213 aa).

This sequence belongs to the NadD family.

The catalysed reaction is nicotinate beta-D-ribonucleotide + ATP + H(+) = deamido-NAD(+) + diphosphate. It participates in cofactor biosynthesis; NAD(+) biosynthesis; deamido-NAD(+) from nicotinate D-ribonucleotide: step 1/1. In terms of biological role, catalyzes the reversible adenylation of nicotinate mononucleotide (NaMN) to nicotinic acid adenine dinucleotide (NaAD). This chain is Probable nicotinate-nucleotide adenylyltransferase, found in Shigella boydii serotype 18 (strain CDC 3083-94 / BS512).